Consider the following 392-residue polypeptide: Na(+)/H(+) antiporter NhaA (392 aa).

11 helical membrane passes run 14–34 (AGGLILIFAAVVALFMANSPL), 59–79 (LLLWINDGLMAIFFLVVGLEV), 95–115 (IFPAIAALGGMLAPALIYLLF), 125–145 (GWAIPAATDIAFALGVMALLG), 154–174 (VFLLALAIIDDLGVIIIIALF), 179–199 (VSLQALGMAAAAIALLGYMNW), 213–233 (LVLWVCILKSGVHATLAGVIV), 254–274 (GLHPWVAYLILPLFAFANAGV), 287–307 (LLPLGIASGLFIGKPLGIFLF), 328–348 (IFAVSVLCGIGFTMSIFIASL), and 363–383 (LGILLGSTTAAVVGYSLLRLA).

This sequence belongs to the NhaA Na(+)/H(+) (TC 2.A.33) antiporter family.

The protein localises to the cell inner membrane. It carries out the reaction Na(+)(in) + 2 H(+)(out) = Na(+)(out) + 2 H(+)(in). Its function is as follows. Na(+)/H(+) antiporter that extrudes sodium in exchange for external protons. This chain is Na(+)/H(+) antiporter NhaA, found in Yersinia enterocolitica serotype O:8 / biotype 1B (strain NCTC 13174 / 8081).